Consider the following 395-residue polypeptide: Argininosuccinate synthase (395 aa).

7-15 (LYSGGLDTS) lines the ATP pocket. Tyr-83 contributes to the L-citrulline binding site. Gly-113 contacts ATP. L-aspartate is bound by residues Thr-115, Asn-119, and Asp-120. Asn-119 contributes to the L-citrulline binding site. 5 residues coordinate L-citrulline: Arg-123, Ser-169, Ser-178, Glu-253, and Tyr-265.

It belongs to the argininosuccinate synthase family. Type 1 subfamily. Homotetramer.

The protein localises to the cytoplasm. It catalyses the reaction L-citrulline + L-aspartate + ATP = 2-(N(omega)-L-arginino)succinate + AMP + diphosphate + H(+). It functions in the pathway amino-acid biosynthesis; L-arginine biosynthesis; L-arginine from L-ornithine and carbamoyl phosphate: step 2/3. This chain is Argininosuccinate synthase, found in Picrophilus torridus (strain ATCC 700027 / DSM 9790 / JCM 10055 / NBRC 100828 / KAW 2/3).